The following is a 901-amino-acid chain: Protein translocase subunit SecA (901 aa).

Residues Gln-87, Gly-105–Thr-109, and Asp-512 contribute to the ATP site. Residues His-859–Gln-901 are disordered. 4 residues coordinate Zn(2+): Cys-885, Cys-887, Cys-896, and His-897. Positions Lys-891 to Gln-901 are enriched in basic residues.

This sequence belongs to the SecA family. Monomer and homodimer. Part of the essential Sec protein translocation apparatus which comprises SecA, SecYEG and auxiliary proteins SecDF-YajC and YidC. Requires Zn(2+) as cofactor.

Its subcellular location is the cell inner membrane. It is found in the cytoplasm. It catalyses the reaction ATP + H2O + cellular proteinSide 1 = ADP + phosphate + cellular proteinSide 2.. Its function is as follows. Part of the Sec protein translocase complex. Interacts with the SecYEG preprotein conducting channel. Has a central role in coupling the hydrolysis of ATP to the transfer of proteins into and across the cell membrane, serving both as a receptor for the preprotein-SecB complex and as an ATP-driven molecular motor driving the stepwise translocation of polypeptide chains across the membrane. The chain is Protein translocase subunit SecA from Escherichia coli O127:H6 (strain E2348/69 / EPEC).